A 162-amino-acid polypeptide reads, in one-letter code: Photosystem II extrinsic protein V (162 aa).

Residues 1 to 26 (MLKRYMLLAVATVFFAFQVLTSTATA) form the signal peptide. The heme c site is built by cysteine 62, cysteine 65, histidine 66, and histidine 117.

It belongs to the cytochrome c family. PsbV subfamily. As to quaternary structure, PSII is composed of 1 copy each of membrane proteins PsbA, PsbB, PsbC, PsbD, PsbE, PsbF, PsbH, PsbI, PsbJ, PsbK, PsbL, PsbM, PsbT, PsbX, PsbY, PsbZ, Psb30/Ycf12, peripheral proteins PsbO, CyanoQ (PsbQ), PsbU, PsbV and a large number of cofactors. It forms dimeric complexes. Heme c serves as cofactor.

The protein localises to the cellular thylakoid membrane. In terms of biological role, one of the extrinsic, lumenal subunits of photosystem II (PSII). PSII is a light-driven water plastoquinone oxidoreductase, using light energy to abstract electrons from H(2)O, generating a proton gradient subsequently used for ATP formation. The extrinsic proteins stabilize the structure of photosystem II oxygen-evolving complex (OEC), the ion environment of oxygen evolution and protect the OEC against heat-induced inactivation. Low-potential cytochrome c that plays a role in the OEC of PSII. The polypeptide is Photosystem II extrinsic protein V (Acaryochloris marina (strain MBIC 11017)).